Reading from the N-terminus, the 173-residue chain is Nascent polypeptide-associated complex subunit alpha (173 aa).

The 65-residue stretch at 21 to 85 (VVHAEKAQKL…VTVEDMAAQA (65 aa)) folds into the NAC-A/B domain. A disordered region spans residues 89–117 (NESQKQATETKEEAAITEESGDAQPADTA). Ser-122 is subject to Phosphoserine. In terms of domain architecture, UBA spans 134 to 171 (VDAKDIELVMAQANVSRAKAVTALKENNSDVVNAIMSL).

This sequence belongs to the NAC-alpha family. In terms of assembly, part of the nascent polypeptide-associated complex (NAC), consisting of ucp15 and btf3. NAC associates with ribosomes via btf3.

It localises to the cytoplasm. The protein localises to the nucleus. Functionally, component of the nascent polypeptide-associated complex (NAC), a dynamic component of the ribosomal exit tunnel, protecting the emerging polypeptides from interaction with other cytoplasmic proteins to ensure appropriate nascent protein targeting. The NAC complex also promotes mitochondrial protein import by enhancing productive ribosome interactions with the outer mitochondrial membrane and blocks the inappropriate interaction of ribosomes translating non-secretory nascent polypeptides with translocation sites in the membrane of the endoplasmic reticulum. Ucp15 may also be involved in transcription regulation. In Schizosaccharomyces pombe (strain 972 / ATCC 24843) (Fission yeast), this protein is Nascent polypeptide-associated complex subunit alpha (egd2).